The chain runs to 220 residues: MASTDDPAGQRPSRAEAIVAHAEQSISEDAIVAAARERAVDMGAGAVTPAVGALLSVLARLTEAKAVVEVGTGAGVSGLWLLSGMREDGVLTTIDVEPEHQRIAKQAFTEAGIGPGRTRLISGRAQDVLTRLADESYDLVFIDADPVDQPQFVVEGVRLLRSGGAIVVHRAALGGRAGDAGANDAEVSAVREAARLIAEDERLTPVLIPLGDGLLAAARD.

Residues Val-47, Glu-69, 71–72 (GT), Ser-77, Asp-95, and Val-96 each bind S-adenosyl-L-methionine. Asp-143 provides a ligand contact to substrate. Asp-145 is a binding site for S-adenosyl-L-methionine.

Belongs to the class I-like SAM-binding methyltransferase superfamily. Cation-dependent O-methyltransferase family.

This Mycobacterium sp. (strain MCS) protein is Putative O-methyltransferase Mmcs_3995.